The primary structure comprises 169 residues: Glycine-rich RNA-binding protein GRP2A (169 aa).

An RRM domain is found at Tyr-8–Ser-86. Disordered regions lie at residues Met-69–Gly-100 and Tyr-125–Trp-169. Gly residues predominate over residues Ser-89–Gly-100.

Predominantly expressed in meristematic and growing tissue.

Its subcellular location is the nucleus. Functionally, may play a general role in circadian phenomena associated with meristematic tissue. In Sinapis alba (White mustard), this protein is Glycine-rich RNA-binding protein GRP2A.